The following is a 777-amino-acid chain: Serine/threonine-protein kinase PLK4 (777 aa).

Residues 14 to 268 enclose the Protein kinase domain; the sequence is YEVQHLLGKG…LEQVLRHPFL (255 aa). ATP is bound by residues 20-28 and Lys-43; that span reads LGKGGFASV. Asp-139 acts as the Proton acceptor in catalysis. Polar residues predominate over residues 371-381; that stretch reads TNNLAPFTSDS. A disordered region spans residues 371–390; that stretch reads TNNLAPFTSDSDMIPSPVGE. The 118-residue stretch at 390–507 folds into the Cryptic POLO box 1 (CPB1) domain; sequence EKRLLMPPLE…ARFVGLVKSK (118 aa). The 104-residue stretch at 508-611 folds into the Cryptic POLO box 2 (CPB2) domain; that stretch reads TPKITFFSSL…GRRPAADMHA (104 aa). In terms of domain architecture, POLO box spans 669-748; the sequence is PIKRITVPEI…MPQLQMKLKC (80 aa).

The protein belongs to the protein kinase superfamily. Ser/Thr protein kinase family. CDC5/Polo subfamily. Homodimer. Ubiquitinated by the SCF(Slimb) ubiquitin ligase complex; leading to its degradation by the proteasome during interphase and regulating centriole number and ensuring the block to centriole reduplication.

The protein localises to the cytoplasm. It is found in the cytoskeleton. The protein resides in the microtubule organizing center. Its subcellular location is the centrosome. It localises to the centriole. The enzyme catalyses L-seryl-[protein] + ATP = O-phospho-L-seryl-[protein] + ADP + H(+). It carries out the reaction L-threonyl-[protein] + ATP = O-phospho-L-threonyl-[protein] + ADP + H(+). Serine/threonine-protein kinase that plays a central role in centriole duplication. Able to trigger procentriole formation on the surface of the mother centriole cylinder, using mother centriole as a platform, leading to the recruitment of centriole biogenesis proteins such as sas-6. When overexpressed, it is able to induce centrosome amplification through the simultaneous generation of multiple procentrioles adjoining each parental centriole during S phase. Centrosome amplification following overexpression can initiate tumorigenesis, highlighting the importance of centrosome regulation in cancers. The chain is Serine/threonine-protein kinase PLK4 (SAK) from Drosophila persimilis (Fruit fly).